Reading from the N-terminus, the 264-residue chain is Phosphonoacetaldehyde hydrolase (264 aa).

The active-site Nucleophile is the Asp-9. Residues Asp-9 and Ala-11 each coordinate Mg(2+). Lys-50 functions as the Schiff-base intermediate with substrate in the catalytic mechanism. Asp-183 contacts Mg(2+).

Belongs to the HAD-like hydrolase superfamily. PhnX family. Homodimer. Mg(2+) is required as a cofactor.

The enzyme catalyses phosphonoacetaldehyde + H2O = acetaldehyde + phosphate + H(+). In terms of biological role, involved in phosphonate degradation. This is Phosphonoacetaldehyde hydrolase from Bacillus cytotoxicus (strain DSM 22905 / CIP 110041 / 391-98 / NVH 391-98).